A 723-amino-acid chain; its full sequence is Epidermal growth factor receptor kinase substrate 8-like protein 1 (723 aa).

Positions 35–164 constitute a PTB domain; sequence QYPVNHLVTF…LHNYRSGRGE (130 aa). Positions 162–183 are enriched in basic and acidic residues; the sequence is RGERRAAALRATQEELQRDRSP. Disordered regions lie at residues 162–247, 442–477, 537–589, and 609–636; these read RGER…PRGP, KQLQHERRRRQQSAPQVAVNGHRDLEPESEPQLESE, GPRL…GLDP, and LAQGRSGPSRAVPGPRAPEPQLSPGSDA. Position 182 is a phosphoserine (serine 182). Position 187 is a phosphothreonine (threonine 187). The region spanning 478–537 is the SH3 domain; sequence TAGKWVLCNYDFQARNSSELSVKQRDVLEVLDDSRKWWKVRDPAGQEGYVPYNILTPYPG. Residues 543-552 are compositionally biased toward polar residues; sequence SQSPARSLNS. Over residues 553–568 the composition is skewed to pro residues; the sequence is TPPPPPAPAPAPPPAL. Basic and acidic residues predominate over residues 571–580; sequence PRWDRPRWDS. Residues 689–719 are a coiled coil; the sequence is VQRSLLEDKEKVSELEAVMEKQKKKVEGEVE.

The protein belongs to the EPS8 family. As to quaternary structure, interacts with ABI1. Part of a complex that contains SOS1, ABI1 and EPS8L2. Associates with F-actin. In terms of tissue distribution, detected in placenta.

Its subcellular location is the cytoplasm. Functionally, stimulates guanine exchange activity of SOS1. May play a role in membrane ruffling and remodeling of the actin cytoskeleton. The polypeptide is Epidermal growth factor receptor kinase substrate 8-like protein 1 (EPS8L1) (Homo sapiens (Human)).